The following is a 158-amino-acid chain: Cyclic pyranopterin monophosphate synthase (158 aa).

Substrate-binding positions include 75-77 (LCH) and 113-114 (ME). The active site involves aspartate 128.

This sequence belongs to the MoaC family. Homohexamer; trimer of dimers.

The enzyme catalyses (8S)-3',8-cyclo-7,8-dihydroguanosine 5'-triphosphate = cyclic pyranopterin phosphate + diphosphate. It functions in the pathway cofactor biosynthesis; molybdopterin biosynthesis. Catalyzes the conversion of (8S)-3',8-cyclo-7,8-dihydroguanosine 5'-triphosphate to cyclic pyranopterin monophosphate (cPMP). This chain is Cyclic pyranopterin monophosphate synthase, found in Histophilus somni (strain 129Pt) (Haemophilus somnus).